The chain runs to 504 residues: Maturase K (504 aa).

Belongs to the intron maturase 2 family. MatK subfamily.

It localises to the plastid. It is found in the chloroplast. Its function is as follows. Usually encoded in the trnK tRNA gene intron. Probably assists in splicing its own and other chloroplast group II introns. In Capsella bursa-pastoris (Shepherd's purse), this protein is Maturase K.